The sequence spans 403 residues: Probable tRNA sulfurtransferase (403 aa).

Residues 61-166 (EAIAESLKDV…SGYSYIMCDE (106 aa)) enclose the THUMP domain. ATP is bound by residues 184–185 (LL), 209–210 (HF), Arg-266, Gly-288, and Gln-297.

This sequence belongs to the ThiI family.

The protein localises to the cytoplasm. It carries out the reaction [ThiI sulfur-carrier protein]-S-sulfanyl-L-cysteine + a uridine in tRNA + 2 reduced [2Fe-2S]-[ferredoxin] + ATP + H(+) = [ThiI sulfur-carrier protein]-L-cysteine + a 4-thiouridine in tRNA + 2 oxidized [2Fe-2S]-[ferredoxin] + AMP + diphosphate. It catalyses the reaction [ThiS sulfur-carrier protein]-C-terminal Gly-Gly-AMP + S-sulfanyl-L-cysteinyl-[cysteine desulfurase] + AH2 = [ThiS sulfur-carrier protein]-C-terminal-Gly-aminoethanethioate + L-cysteinyl-[cysteine desulfurase] + A + AMP + 2 H(+). The protein operates within cofactor biosynthesis; thiamine diphosphate biosynthesis. Its function is as follows. Catalyzes the ATP-dependent transfer of a sulfur to tRNA to produce 4-thiouridine in position 8 of tRNAs, which functions as a near-UV photosensor. Also catalyzes the transfer of sulfur to the sulfur carrier protein ThiS, forming ThiS-thiocarboxylate. This is a step in the synthesis of thiazole, in the thiamine biosynthesis pathway. The sulfur is donated as persulfide by IscS. In Bacillus cytotoxicus (strain DSM 22905 / CIP 110041 / 391-98 / NVH 391-98), this protein is Probable tRNA sulfurtransferase.